Here is a 94-residue protein sequence, read N- to C-terminus: Conotoxin Gla-MrII (94 aa).

The first 25 residues, 1–25 (MFGHTSVSFLLLSIVALGMVATVIC), serve as a signal peptide directing secretion. Residues E30, E34, E37, E40, and E41 each carry the 4-carboxyglutamate modification. The propeptide occupies 78–94 (STHMQKRFLRMPRDLAD).

The protein belongs to the conotoxin I2 superfamily. Contains 4 disulfide bonds. Expressed by the venom duct.

It is found in the secreted. The polypeptide is Conotoxin Gla-MrII (Conus marmoreus (Marble cone)).